The primary structure comprises 349 residues: Hydroxymethylglutaryl-CoA synthase (349 aa).

Residues aspartate 30 and alanine 31 each coordinate (3S)-3-hydroxy-3-methylglutaryl-CoA. Glutamate 82 serves as the catalytic Proton donor/acceptor. (3S)-3-hydroxy-3-methylglutaryl-CoA is bound by residues cysteine 114 and threonine 155. Cysteine 114 (acyl-thioester intermediate) is an active-site residue. Position 203 (arginine 203) interacts with CoA. (3S)-3-hydroxy-3-methylglutaryl-CoA is bound by residues threonine 205 and histidine 238. Histidine 238 serves as the catalytic Proton donor/acceptor. Lysine 243 is a CoA binding site. Residues asparagine 270 and serine 300 each coordinate (3S)-3-hydroxy-3-methylglutaryl-CoA.

The protein belongs to the thiolase-like superfamily. Archaeal HMG-CoA synthase family. In terms of assembly, interacts with acetoacetyl-CoA thiolase that catalyzes the precedent step in the pathway and with a DUF35 protein. The acetoacetyl-CoA thiolase/HMG-CoA synthase complex channels the intermediate via a fused CoA-binding site, which allows for efficient coupling of the endergonic thiolase reaction with the exergonic HMGCS reaction.

It catalyses the reaction acetoacetyl-CoA + acetyl-CoA + H2O = (3S)-3-hydroxy-3-methylglutaryl-CoA + CoA + H(+). It participates in metabolic intermediate biosynthesis; (R)-mevalonate biosynthesis; (R)-mevalonate from acetyl-CoA: step 2/3. In terms of biological role, catalyzes the condensation of acetyl-CoA with acetoacetyl-CoA to form 3-hydroxy-3-methylglutaryl-CoA (HMG-CoA). Functions in the mevalonate (MVA) pathway leading to isopentenyl diphosphate (IPP), a key precursor for the biosynthesis of isoprenoid compounds that are building blocks of archaeal membrane lipids. The polypeptide is Hydroxymethylglutaryl-CoA synthase (Methanococcus vannielii (strain ATCC 35089 / DSM 1224 / JCM 13029 / OCM 148 / SB)).